A 138-amino-acid polypeptide reads, in one-letter code: Ribulose bisphosphate carboxylase small subunit (138 aa).

It belongs to the RuBisCO small chain family. In terms of assembly, heterohexadecamer of 8 large and 8 small subunits.

It localises to the plastid. The protein resides in the chloroplast. Functionally, ruBisCO catalyzes two reactions: the carboxylation of D-ribulose 1,5-bisphosphate, the primary event in carbon dioxide fixation, as well as the oxidative fragmentation of the pentose substrate in the photorespiration process. Both reactions occur simultaneously and in competition at the same active site. Although the small subunit is not catalytic it is essential for maximal activity. The polypeptide is Ribulose bisphosphate carboxylase small subunit (Cyanidioschyzon merolae (strain NIES-3377 / 10D) (Unicellular red alga)).